Here is a 307-residue protein sequence, read N- to C-terminus: Ribosomal RNA small subunit methyltransferase H (307 aa).

S-adenosyl-L-methionine is bound by residues 32–34 (GGH), D52, F78, D100, and Q107.

This sequence belongs to the methyltransferase superfamily. RsmH family.

The protein localises to the cytoplasm. It catalyses the reaction cytidine(1402) in 16S rRNA + S-adenosyl-L-methionine = N(4)-methylcytidine(1402) in 16S rRNA + S-adenosyl-L-homocysteine + H(+). Its function is as follows. Specifically methylates the N4 position of cytidine in position 1402 (C1402) of 16S rRNA. The chain is Ribosomal RNA small subunit methyltransferase H from Coxiella burnetii (strain CbuK_Q154) (Coxiella burnetii (strain Q154)).